A 109-amino-acid chain; its full sequence is Class I hydrophobin dewE (109 aa).

Positions 1–20 are cleaved as a signal peptide; it reads MKVATALSVLAVAGSALASA. Disulfide bonds link Cys34–Cys87, Cys40–Cys81, Cys41–Cys74, and Cys88–Cys102.

This sequence belongs to the fungal hydrophobin family. As to quaternary structure, self-assembles to form functional amyloid fibrils called rodlets. Self-assembly into fibrillar rodlets occurs spontaneously at hydrophobic:hydrophilic interfaces and the rodlets further associate laterally to form amphipathic monolayers.

The protein resides in the secreted. It is found in the spore wall. Functionally, aerial growth, conidiation, and dispersal of filamentous fungi in the environment rely upon a capability of their secreting small amphipathic proteins called hydrophobins (HPBs) with low sequence identity. Class I can self-assemble into an outermost layer of rodlet bundles on aerial cell surfaces, conferring cellular hydrophobicity that supports fungal growth, development and dispersal; whereas Class II form highly ordered films at water-air interfaces through intermolecular interactions but contribute nothing to the rodlet structure. DewE is a class I hydrophobin that contributes to the hydrophobicity of the spore surface. The protein is Class I hydrophobin dewE of Emericella nidulans (strain FGSC A4 / ATCC 38163 / CBS 112.46 / NRRL 194 / M139) (Aspergillus nidulans).